The sequence spans 156 residues: RNA pyrophosphohydrolase (156 aa).

A Nudix hydrolase domain is found at 6 to 148 (NYRPNVAAIV…KKNIYVKVIK (143 aa)). Residues 43–64 (GGIDKGESVKNALFRELKEEIG) carry the Nudix box motif.

This sequence belongs to the Nudix hydrolase family. RppH subfamily. A divalent metal cation serves as cofactor.

Its function is as follows. Accelerates the degradation of transcripts by removing pyrophosphate from the 5'-end of triphosphorylated RNA, leading to a more labile monophosphorylated state that can stimulate subsequent ribonuclease cleavage. This Campylobacter jejuni subsp. jejuni serotype O:6 (strain 81116 / NCTC 11828) protein is RNA pyrophosphohydrolase.